A 175-amino-acid polypeptide reads, in one-letter code: Protein MODIFYING WALL LIGNIN-1 (175 aa).

A signal peptide spans 1–24 (MFIFLFGLAAFFLCLSAEFQKAKA). Residues 25 to 52 (LLRAQVFLKGKDLKWDGESCYLPENRAF) are Cytoplasmic-facing. A helical transmembrane segment spans residues 53 to 73 (GLGIAALVCVSVAQIVGNVVI). Topologically, residues 74–86 (CRGFTKTDKTRTT) are extracellular. The helical transmembrane segment at 87–107 (IFCIILLLFSWVNFAVAVTLI) threads the bilayer. At 108 to 135 (SVGASMNREQIYGKGWLNRECYLVKDGV) the chain is on the cytoplasmic side. Residues 136–156 (FAASGFLSVTTMAAILGAFAF) traverse the membrane as a helical segment. Residues 157-175 (KVKPSLQVENHDKRHTQNV) lie on the Extracellular side of the membrane.

Belongs to the DESIGUAL family. In terms of assembly, interacts with CRK19.

The protein resides in the cell membrane. Functionally, together with MWL2, contributes to secondary cell wall biology, specifically lignin biosynthesis. In Arabidopsis thaliana (Mouse-ear cress), this protein is Protein MODIFYING WALL LIGNIN-1.